The sequence spans 933 residues: MKLKETLNLGKTAFPMRAGLPNKEPQWQAAWEQAELYKKRQELNAGKPAFHLHDGPPYANGNIHVGHALNKISKDIIVRSKSMSGFQAPYVPGWDTHGLPIEQVLAKQGIKRKEMDLAEYLEMCRQYALSQVDKQRDDFKRLGVSADWENPYVTLDPQFEADQIRVFGAMAEKGYIYRGAKPVYWSWSSESALAEAEIEYHDIDSTSLYYANKVKDGKGILDTNTYIVVWTTTPFTVTASRGLTVGPDMDYLVVKPAGSDRQYVVAEGLLDSLAGKFGWESFETLASHKGADLEYIVTEHPWDTDVEELVILGDHVTLESGTGIVHTAPGFGEDDYNVGTKYKLEVAVTVDERGLMMENAGPDFHGQFYNKVTPIVIDKLGDLLLAQEVINHSYPFDWRTKKPIIWRAVPQWFASVSDFRQDILDEIEKTTFHPSWGETRLYNMIRDRGDWVISRQRAWGVPLPIFYAEDGTAIMTKEVTDHVADLFQENGSIIWWQKEAKDLLPEGFTHPGSPNGEFTKETDIMDVWFDSGSSWNGVMNTKENLSYPADLYLEGSDQYRGWFNSSLITSVAVNGHAPYKAILSQGFVLDGKGEKMSKSKGNIISPNDVAKQYGADILRLWVASVDTDNDVRVSMEILGQVSETYRKIRNTLRFLIANTSDFNPATDTVAYADLGTVDKYMTIVFNQLVATITDAYERYDFMAIYKAVVNFVTVDLSAFYLDFAKDVVYIEAANSLERRRMQTVFYDILVKITKLLTPILPHTTEEIWSYLEHESEAFVQLAEMPVAETFSAQEDILEAWSAFMTLRTQAQKALEEARNAKIIGKSLEAHLTIYASEEVKTLLTALDSDIALLLIVSQLTIADLADAPADAVAFEGVAFIVEHAIGEVCERSRRIDPTTRMRSYNAFVCDHSAKIIEENFPEAVAEGFEESGK.

A 'HIGH' region motif is present at residues 57–67 (PYANGNIHVGH). Glu554 lines the L-isoleucyl-5'-AMP pocket. The 'KMSKS' region motif lies at 595-599 (KMSKS). Lys598 is an ATP binding site.

This sequence belongs to the class-I aminoacyl-tRNA synthetase family. IleS type 1 subfamily. In terms of assembly, monomer.

It is found in the cytoplasm. The catalysed reaction is tRNA(Ile) + L-isoleucine + ATP = L-isoleucyl-tRNA(Ile) + AMP + diphosphate. Its function is as follows. Catalyzes the attachment of isoleucine to tRNA(Ile). As IleRS can inadvertently accommodate and process structurally similar amino acids such as valine, to avoid such errors it has two additional distinct tRNA(Ile)-dependent editing activities. One activity is designated as 'pretransfer' editing and involves the hydrolysis of activated Val-AMP. The other activity is designated 'posttransfer' editing and involves deacylation of mischarged Val-tRNA(Ile). In Streptococcus pyogenes serotype M1, this protein is Isoleucine--tRNA ligase.